Here is a 467-residue protein sequence, read N- to C-terminus: Argininosuccinate lyase 1 (467 aa).

The protein belongs to the lyase 1 family. Argininosuccinate lyase subfamily.

Its subcellular location is the cytoplasm. The enzyme catalyses 2-(N(omega)-L-arginino)succinate = fumarate + L-arginine. Its pathway is amino-acid biosynthesis; L-arginine biosynthesis; L-arginine from L-ornithine and carbamoyl phosphate: step 3/3. The sequence is that of Argininosuccinate lyase 1 from Rhizobium meliloti (strain 1021) (Ensifer meliloti).